Here is a 238-residue protein sequence, read N- to C-terminus: MEKREKLYEGKAKIIYATDEPDKVIAYYKDSATAFDAIKKATIEGKGVLNNKIASFFFQLLNEKGIPTHFIKQISDREMLIYKVDIIPVEVVVRNIAAGSIVKRLGIPEKKEFDPPLVEFYLKNDELHDPIICEQHIYAMDLAKPEEVQKMKELALKVNDVLREFMREQGIILVDFKLEFGRKDGQIILADEISPDTCRFWDAKTGEKLDKDRFRFDLGDLIEGYTKILEKIQKKEGE.

This sequence belongs to the SAICAR synthetase family.

The catalysed reaction is 5-amino-1-(5-phospho-D-ribosyl)imidazole-4-carboxylate + L-aspartate + ATP = (2S)-2-[5-amino-1-(5-phospho-beta-D-ribosyl)imidazole-4-carboxamido]succinate + ADP + phosphate + 2 H(+). Its pathway is purine metabolism; IMP biosynthesis via de novo pathway; 5-amino-1-(5-phospho-D-ribosyl)imidazole-4-carboxamide from 5-amino-1-(5-phospho-D-ribosyl)imidazole-4-carboxylate: step 1/2. The chain is Phosphoribosylaminoimidazole-succinocarboxamide synthase from Persephonella marina (strain DSM 14350 / EX-H1).